Reading from the N-terminus, the 436-residue chain is Small ribosomal subunit protein uS5m (436 aa).

Residues 152–218 (FETYCLEVKR…GMASRKLFHV (67 aa)) form the S5 DRBM domain. The segment at 417–436 (GVEPMPLGIGLSHVVPKKDD) is disordered.

It belongs to the universal ribosomal protein uS5 family. Component of the mitochondrial ribosome small subunit (28S) which comprises a 12S rRNA and about 30 distinct proteins.

It localises to the mitochondrion. This chain is Small ribosomal subunit protein uS5m (mrps-5), found in Caenorhabditis elegans.